A 245-amino-acid polypeptide reads, in one-letter code: Eukaryotic translation initiation factor 6 (245 aa).

Belongs to the eIF-6 family. As to quaternary structure, monomer. Associates with the 60S ribosomal subunit.

It is found in the cytoplasm. The protein localises to the nucleus. Its subcellular location is the nucleolus. Binds to the 60S ribosomal subunit and prevents its association with the 40S ribosomal subunit to form the 80S initiation complex in the cytoplasm. May also be involved in ribosome biogenesis. The sequence is that of Eukaryotic translation initiation factor 6 from Ostreococcus lucimarinus (strain CCE9901).